The primary structure comprises 628 residues: Venom redulysin 1 (628 aa).

Positions 1–19 (MSKLWLLLLLVAAFQAVHS) are cleaved as a signal peptide. Positions 20–368 (YPAAESDYLE…EDDVAESDEE (349 aa)) are excised as a propeptide. The tract at residues 290-313 (DYEEEEEEEEEEEFELEEDYEEDP) is disordered. Residues 291 to 313 (YEEEEEEEEEEEFELEEDYEEDP) are compositionally biased toward acidic residues.

Belongs to the redulysin-like family. Post-translationally, contains 5 disulfide bonds. Expressed by the venom gland (posterior main gland) (at protein level).

The protein localises to the secreted. Functionally, highly abundant protein that may be responsible for the observed disruption of sensory neuron membranes, since it is homologous to proteins such as trialysin, which forms pores in lipid bilayers. Probable insecticidal toxin. The chain is Venom redulysin 1 from Platymeris rhadamanthus (Red spot assassin bug).